A 355-amino-acid chain; its full sequence is N-acetyl-gamma-glutamyl-phosphate reductase (355 aa).

The active site involves Cys152.

This sequence belongs to the NAGSA dehydrogenase family. Type 1 subfamily.

Its subcellular location is the cytoplasm. It carries out the reaction N-acetyl-L-glutamate 5-semialdehyde + phosphate + NADP(+) = N-acetyl-L-glutamyl 5-phosphate + NADPH + H(+). It functions in the pathway amino-acid biosynthesis; L-arginine biosynthesis; N(2)-acetyl-L-ornithine from L-glutamate: step 3/4. Functionally, catalyzes the NADPH-dependent reduction of N-acetyl-5-glutamyl phosphate to yield N-acetyl-L-glutamate 5-semialdehyde. This is N-acetyl-gamma-glutamyl-phosphate reductase from Psychrobacter arcticus (strain DSM 17307 / VKM B-2377 / 273-4).